Here is a 30-residue protein sequence, read N- to C-terminus: Protein Tat (30 aa).

The disordered stretch occupies residues 1 to 30 (PLPTTRGNPTGPKESKKEVESKTETDPFAW). The short motif at 6-8 (RGN) is the Cell attachment site element. Residues 13–30 (KESKKEVESKTETDPFAW) show a composition bias toward basic and acidic residues.

Belongs to the lentiviruses Tat family. As to quaternary structure, interacts with host CCNT1. Associates with the P-TEFb complex composed at least of Tat, P-TEFb (CDK9 and CCNT1), TAR RNA, RNA Pol II. Recruits the HATs CREBBP, TAF1/TFIID, EP300, PCAF and GCN5L2. Interacts with host KAT5/Tip60; this interaction targets the latter to degradation. Interacts with the host deacetylase SIRT1. Interacts with host capping enzyme RNGTT; this interaction stimulates RNGTT. Binds to host KDR, and to the host integrins ITGAV/ITGB3 and ITGA5/ITGB1. Interacts with host KPNB1/importin beta-1 without previous binding to KPNA1/importin alpha-1. Interacts with EIF2AK2. Interacts with host nucleosome assembly protein NAP1L1; this interaction may be required for the transport of Tat within the nucleus, since the two proteins interact at the nuclear rim. Interacts with host C1QBP/SF2P32; this interaction involves lysine-acetylated Tat. Interacts with the host chemokine receptors CCR2, CCR3 and CXCR4. Interacts with host DPP4/CD26; this interaction may trigger an anti-proliferative effect. Interacts with host LDLR. Interacts with the host extracellular matrix metalloproteinase MMP1. Interacts with host PRMT6; this interaction mediates Tat's methylation. Interacts with, and is ubiquitinated by MDM2/Hdm2. Interacts with host PSMC3 and HTATIP2. Interacts with STAB1; this interaction may overcome SATB1-mediated repression of IL2 and IL2RA (interleukin) in T cells by binding to the same domain than HDAC1. Interacts (when acetylated on Lys-50 and Lys-51) with human CDK13, thereby increasing HIV-1 mRNA splicing and promoting the production of the doubly spliced HIV-1 protein Nef. Post-translationally, acetylation by EP300, CREBBP, GCN5L2/GCN5 and PCAF regulates the transactivation activity of Tat. EP300-mediated acetylation of Lys-50 promotes dissociation of Tat from the TAR RNA through the competitive binding to PCAF's bromodomain. In addition, the non-acetylated Tat's N-terminus can also interact with PCAF. PCAF-mediated acetylation of Lys-28 enhances Tat's binding to CCNT1. Lys-50 is deacetylated by SIRT1. In terms of processing, phosphorylated by EIF2AK2 on serine and threonine residues adjacent to the basic region important for TAR RNA binding and function. Phosphorylation of Tat by EIF2AK2 is dependent on the prior activation of EIF2AK2 by dsRNA. Asymmetrical arginine methylation by host PRMT6 seems to diminish the transactivation capacity of Tat and affects the interaction with host CCNT1. Post-translationally, polyubiquitination by MDM2 does not target Tat to degradation, but activates its transactivation function and fosters interaction with CCNT1 and TAR RNA.

Its subcellular location is the host nucleus. The protein resides in the host nucleolus. The protein localises to the host cytoplasm. It localises to the secreted. Its function is as follows. Transcriptional activator that increases RNA Pol II processivity, thereby increasing the level of full-length viral transcripts. Recognizes a hairpin structure at the 5'-LTR of the nascent viral mRNAs referred to as the transactivation responsive RNA element (TAR) and recruits the cyclin T1-CDK9 complex (P-TEFb complex) that will in turn hyperphosphorylate the RNA polymerase II to allow efficient elongation. The CDK9 component of P-TEFb and other Tat-activated kinases hyperphosphorylate the C-terminus of RNA Pol II that becomes stabilized and much more processive. Other factors such as HTATSF1/Tat-SF1, SUPT5H/SPT5, and HTATIP2 are also important for Tat's function. Besides its effect on RNA Pol II processivity, Tat induces chromatin remodeling of proviral genes by recruiting the histone acetyltransferases (HATs) CREBBP, EP300 and PCAF to the chromatin. This also contributes to the increase in proviral transcription rate, especially when the provirus integrates in transcriptionally silent region of the host genome. To ensure maximal activation of the LTR, Tat mediates nuclear translocation of NF-kappa-B by interacting with host RELA. Through its interaction with host TBP, Tat may also modulate transcription initiation. Tat can reactivate a latently infected cell by penetrating in it and transactivating its LTR promoter. In the cytoplasm, Tat is thought to act as a translational activator of HIV-1 mRNAs. In terms of biological role, extracellular circulating Tat can be endocytosed by surrounding uninfected cells via the binding to several surface receptors such as CD26, CXCR4, heparan sulfate proteoglycans (HSPG) or LDLR. Neurons are rarely infected, but they internalize Tat via their LDLR. Endosomal low pH allows Tat to cross the endosome membrane to enter the cytosol and eventually further translocate into the nucleus, thereby inducing severe cell dysfunctions ranging from cell activation to cell death. Through its interaction with nuclear HATs, Tat is potentially able to control the acetylation-dependent cellular gene expression. Tat seems to inhibit the HAT activity of KAT5/Tip60 and TAF1, and consequently modify the expression of specific cellular genes. Modulates the expression of many cellular genes involved in cell survival, proliferation or in coding for cytokines (such as IL10) or cytokine receptors. May be involved in the derepression of host interleukin IL2 expression. Mediates the activation of cyclin-dependent kinases and dysregulation of microtubule network. Tat plays a role in T-cell and neurons apoptosis. Tat induced neurotoxicity and apoptosis probably contribute to neuroAIDS. Host extracellular matrix metalloproteinase MMP1 cleaves Tat and decreases Tat's mediated neurotoxicity. Circulating Tat also acts as a chemokine-like and/or growth factor-like molecule that binds to specific receptors on the surface of the cells, affecting many cellular pathways. In the vascular system, Tat binds to ITGAV/ITGB3 and ITGA5/ITGB1 integrins dimers at the surface of endothelial cells and competes with bFGF for heparin-binding sites, leading to an excess of soluble bFGF. Binds to KDR/VEGFR-2. All these Tat-mediated effects enhance angiogenesis in Kaposi's sarcoma lesions. The protein is Protein Tat of Human immunodeficiency virus type 1 group M subtype A (isolate Z321) (HIV-1).